Reading from the N-terminus, the 146-residue chain is Hemoglobin subunit beta (146 aa).

The 145-residue stretch at 2–146 (EWTQQERSII…VVFALGRKYH (145 aa)) folds into the Globin domain. Positions 63 and 92 each coordinate heme b.

This sequence belongs to the globin family. Heterotetramer of two alpha chains and two beta chains. Red blood cells.

Involved in oxygen transport from gills to the various peripheral tissues. The sequence is that of Hemoglobin subunit beta (hbb) from Thunnus thynnus (Atlantic bluefin tuna).